Reading from the N-terminus, the 84-residue chain is Transmembrane protein EP84R (84 aa).

Helical transmembrane passes span 31–51 and 60–80; these read VIGV…IIIL and AASI…FLIY.

Belongs to the asfivirus EP84R family.

It is found in the virion membrane. The chain is Transmembrane protein EP84R from Ornithodoros (relapsing fever ticks).